Consider the following 304-residue polypeptide: Choline-phosphate cytidylyltransferase 2 (304 aa).

Residues isoleucine 28–histidine 36 and lysine 66 contribute to the CTP site. Residues lysine 66 and tryptophan 95 each coordinate substrate. CTP-binding positions include histidine 112–aspartate 113, tyrosine 117, and arginine 142–isoleucine 146. The segment at glutamine 266 to valine 292 is disordered. Over residues asparagine 275–cysteine 291 the composition is skewed to acidic residues.

The protein belongs to the cytidylyltransferase family.

It carries out the reaction phosphocholine + CTP + H(+) = CDP-choline + diphosphate. Its pathway is phospholipid metabolism; phosphatidylcholine biosynthesis; phosphatidylcholine from phosphocholine: step 1/2. Functionally, plays an important role in the biosynthesis of the phospholipid phosphatidylcholine. Catalyzes the formation of CDP-choline. The sequence is that of Choline-phosphate cytidylyltransferase 2 from Arabidopsis thaliana (Mouse-ear cress).